The primary structure comprises 210 residues: MRLIPSRLSYLFLHLFAFCYYAQVTIQSPPNFTQHVSEQSKVTDRVSRRLIRTYQLYSRTSGKHVQVLANKKINAMAEDGDVHAKLIVETDTFGSRVRIKGAETGFYICMNRRGKLIGKKNGLGKDCIFTEIVLENNYTALQNVKYEGWYMAFTRKGRPRKGSKTRQHQREVHFMKRLPKGHQIAEHRPFDFINYPFNRRTKRTRYSGER.

A signal peptide spans 1-27 (MRLIPSRLSYLFLHLFAFCYYAQVTIQ).

This sequence belongs to the heparin-binding growth factors family. As to quaternary structure, monomer. Homodimer.

The protein localises to the secreted. Its function is as follows. Plays an important role in the regulation of embryonic development, cell proliferation, cell differentiation and cell migration. Required for Kupffer's vesicle ciliogenesis. The polypeptide is Fibroblast growth factor 8 (Danio rerio (Zebrafish)).